The primary structure comprises 481 residues: Proline--tRNA ligase (481 aa).

This sequence belongs to the class-II aminoacyl-tRNA synthetase family. ProS type 3 subfamily. Homodimer.

The protein localises to the cytoplasm. It carries out the reaction tRNA(Pro) + L-proline + ATP = L-prolyl-tRNA(Pro) + AMP + diphosphate. Catalyzes the attachment of proline to tRNA(Pro) in a two-step reaction: proline is first activated by ATP to form Pro-AMP and then transferred to the acceptor end of tRNA(Pro). The sequence is that of Proline--tRNA ligase from Thermococcus kodakarensis (strain ATCC BAA-918 / JCM 12380 / KOD1) (Pyrococcus kodakaraensis (strain KOD1)).